Consider the following 238-residue polypeptide: Purine nucleoside phosphorylase DeoD-type (238 aa).

H4 provides a ligand contact to a purine D-ribonucleoside. Residues G20, R24, R43, and 87-90 (RVGS) contribute to the phosphate site. Residues 179-181 (EME) and 203-204 (SD) each bind a purine D-ribonucleoside. The active-site Proton donor is the D204.

Belongs to the PNP/UDP phosphorylase family. Homohexamer; trimer of homodimers.

The enzyme catalyses a purine D-ribonucleoside + phosphate = a purine nucleobase + alpha-D-ribose 1-phosphate. It catalyses the reaction a purine 2'-deoxy-D-ribonucleoside + phosphate = a purine nucleobase + 2-deoxy-alpha-D-ribose 1-phosphate. Its function is as follows. Catalyzes the reversible phosphorolytic breakdown of the N-glycosidic bond in the beta-(deoxy)ribonucleoside molecules, with the formation of the corresponding free purine bases and pentose-1-phosphate. The sequence is that of Purine nucleoside phosphorylase DeoD-type from Histophilus somni (strain 2336) (Haemophilus somnus).